Consider the following 461-residue polypeptide: Homocitrate synthase (461 aa).

The Pyruvate carboxyltransferase domain maps to 4 to 259 (VGILDSTLRE…IEVVKLDKLQ (256 aa)). R12 serves as a coordination point for 2-oxoglutarate. A Mg(2+)-binding site is contributed by E13. Positions 76, 136, and 170 each coordinate 2-oxoglutarate. Residues H198 and H200 each coordinate Mg(2+). The active-site Proton acceptor is H292.

This sequence belongs to the alpha-IPM synthase/homocitrate synthase family. Homocitrate synthase LYS20/LYS21 subfamily. It depends on Mg(2+) as a cofactor. The cofactor is Mn(2+).

The catalysed reaction is acetyl-CoA + 2-oxoglutarate + H2O = (2R)-homocitrate + CoA + H(+). It functions in the pathway amino-acid biosynthesis; L-lysine biosynthesis via AAA pathway; L-alpha-aminoadipate from 2-oxoglutarate: step 1/5. Its function is as follows. Catalyzes the aldol-type condensation of 2-oxoglutarate with acetyl-CoA to yield homocitrate. Carries out the first step of the alpha-aminoadipate (AAA) lysine biosynthesis pathway. The chain is Homocitrate synthase from Saccharolobus islandicus (strain L.S.2.15 / Lassen #1) (Sulfolobus islandicus).